The following is a 277-amino-acid chain: Ribosomal RNA small subunit methyltransferase A (277 aa).

S-adenosyl-L-methionine-binding residues include Asn24, Leu26, Gly51, Glu72, Asp96, and Asn123.

Belongs to the class I-like SAM-binding methyltransferase superfamily. rRNA adenine N(6)-methyltransferase family. RsmA subfamily.

It localises to the cytoplasm. The catalysed reaction is adenosine(1518)/adenosine(1519) in 16S rRNA + 4 S-adenosyl-L-methionine = N(6)-dimethyladenosine(1518)/N(6)-dimethyladenosine(1519) in 16S rRNA + 4 S-adenosyl-L-homocysteine + 4 H(+). Its function is as follows. Specifically dimethylates two adjacent adenosines (A1518 and A1519) in the loop of a conserved hairpin near the 3'-end of 16S rRNA in the 30S particle. May play a critical role in biogenesis of 30S subunits. In Ureaplasma parvum serovar 3 (strain ATCC 27815 / 27 / NCTC 11736), this protein is Ribosomal RNA small subunit methyltransferase A.